The following is an 834-amino-acid chain: Periplasmic nitrate reductase (834 aa).

The segment at residues 1-29 (MNLTRREFAKANAAAIAAAAAGLPILVRA) is a signal peptide (tat-type signal). The region spanning 41–97 (LVWNKAPCRFCGTGCSVMVATRDGQVVATHGDIKAEVNRGINCVKGYFLSKIMYGSD) is the 4Fe-4S Mo/W bis-MGD-type domain. Cys-48, Cys-51, Cys-55, and Cys-83 together coordinate [4Fe-4S] cluster. Mo-bis(molybdopterin guanine dinucleotide) is bound by residues Lys-85, Gln-152, Asn-177, Cys-181, 214 to 221 (WGSNMAEM), 245 to 249 (STFEH), 264 to 266 (QTD), Met-375, Gln-379, Asn-485, 511 to 512 (SD), Lys-534, Asp-561, and 721 to 730 (TGRVLEHWHT). Phe-797 contacts substrate. Positions 805 and 822 each coordinate Mo-bis(molybdopterin guanine dinucleotide).

The protein belongs to the prokaryotic molybdopterin-containing oxidoreductase family. NasA/NapA/NarB subfamily. Component of the periplasmic nitrate reductase NapAB complex composed of NapA and NapB. The cofactor is [4Fe-4S] cluster. Mo-bis(molybdopterin guanine dinucleotide) serves as cofactor. In terms of processing, predicted to be exported by the Tat system. The position of the signal peptide cleavage has not been experimentally proven.

The protein localises to the periplasm. The catalysed reaction is 2 Fe(II)-[cytochrome] + nitrate + 2 H(+) = 2 Fe(III)-[cytochrome] + nitrite + H2O. In terms of biological role, catalytic subunit of the periplasmic nitrate reductase complex NapAB. Receives electrons from NapB and catalyzes the reduction of nitrate to nitrite. The sequence is that of Periplasmic nitrate reductase from Pseudomonas aeruginosa (strain LESB58).